Consider the following 125-residue polypeptide: PCNA-associated factor (125 aa).

Residues 1 to 125 (MVRTKADSAG…SEEAADSDDE (125 aa)) form a disordered region. Positions 8 to 17 (SAGSSASSGS) are enriched in low complexity. The D-box motif lies at 28 to 39 (RKTFGSSSSGSN). Residues 68–79 (QKGIGEFFGSPS) carry the PIP-box motif. Residues 85 to 87 (KEN) carry the KEN box motif. Residues 95-107 (EAGGSGAGKAPRK) carry the Initiation motif motif. Positions 115–125 (PSEEAADSDDE) are enriched in acidic residues.

Interacts with pcna.

Its subcellular location is the nucleus. The protein localises to the cytoplasm. It localises to the perinuclear region. PCNA-binding protein that acts as a regulator of DNA repair during DNA replication. Following DNA damage, the interaction with pcna is disrupted, facilitating the interaction between monoubiquitinated pcna and the translesion DNA synthesis DNA polymerase eta (polh) at stalled replisomes, facilitating the bypass of replication-fork-blocking lesions. Also acts as a regulator of centrosome number. The protein is PCNA-associated factor of Xenopus tropicalis (Western clawed frog).